The primary structure comprises 180 residues: Isopentenyl-diphosphate Delta-isomerase (180 aa).

The Mn(2+) site is built by His-26 and His-32. In terms of domain architecture, Nudix hydrolase spans 30-168; the sequence is ALHLAFSVLL…PELFTAWFPQ (139 aa). Cys-70 is an active-site residue. Residue Cys-70 participates in Mg(2+) binding. Mn(2+) is bound at residue His-72. Glu-90 is a binding site for Mg(2+). Glu-117 and Glu-119 together coordinate Mn(2+). The active site involves Glu-119.

The protein belongs to the IPP isomerase type 1 family. It depends on Mg(2+) as a cofactor. Mn(2+) serves as cofactor.

The protein resides in the cytoplasm. It catalyses the reaction isopentenyl diphosphate = dimethylallyl diphosphate. Its pathway is isoprenoid biosynthesis; dimethylallyl diphosphate biosynthesis; dimethylallyl diphosphate from isopentenyl diphosphate: step 1/1. Its function is as follows. Catalyzes the 1,3-allylic rearrangement of the homoallylic substrate isopentenyl (IPP) to its highly electrophilic allylic isomer, dimethylallyl diphosphate (DMAPP). In Photobacterium profundum (strain SS9), this protein is Isopentenyl-diphosphate Delta-isomerase.